Reading from the N-terminus, the 188-residue chain is MATYSTNEFRSGLKIMLDGEPCAILESEFVKPGKGQAFARVRIRKLISGKLLEKTFKSTDSVESADVMDMNLTYLYNDGEFWHFMNNETFEQLAADEKAVGDNAKWLVEQAECILTLWNGQPISVTPPNFVELEITDTDPGLKGDTAGTGGKPATLNTGAVVKVPLFVQIGEVIKVDTRSGEYVSRVK.

Lysine 34 bears the N6-(3,6-diaminohexanoyl)-5-hydroxylysine mark.

It belongs to the elongation factor P family. In terms of processing, may be beta-lysylated on the epsilon-amino group of Lys-34 by the combined action of EpmA and EpmB, and then hydroxylated on the C5 position of the same residue by EpmC (if this protein is present). Lysylation is critical for the stimulatory effect of EF-P on peptide-bond formation. The lysylation moiety may extend toward the peptidyltransferase center and stabilize the terminal 3-CCA end of the tRNA. Hydroxylation of the C5 position on Lys-34 may allow additional potential stabilizing hydrogen-bond interactions with the P-tRNA.

It is found in the cytoplasm. Its pathway is protein biosynthesis; polypeptide chain elongation. Functionally, involved in peptide bond synthesis. Alleviates ribosome stalling that occurs when 3 or more consecutive Pro residues or the sequence PPG is present in a protein, possibly by augmenting the peptidyl transferase activity of the ribosome. Modification of Lys-34 is required for alleviation. The polypeptide is Elongation factor P (Photorhabdus laumondii subsp. laumondii (strain DSM 15139 / CIP 105565 / TT01) (Photorhabdus luminescens subsp. laumondii)).